The primary structure comprises 160 residues: Large ribosomal subunit protein uL22c (160 aa).

This sequence belongs to the universal ribosomal protein uL22 family. As to quaternary structure, part of the 50S ribosomal subunit.

Its subcellular location is the plastid. The protein localises to the chloroplast. In terms of biological role, this protein binds specifically to 23S rRNA. Its function is as follows. The globular domain of the protein is located near the polypeptide exit tunnel on the outside of the subunit, while an extended beta-hairpin is found that lines the wall of the exit tunnel in the center of the 70S ribosome. This chain is Large ribosomal subunit protein uL22c (rpl22), found in Draba nemorosa (Woodland whitlowgrass).